An 89-amino-acid chain; its full sequence is Small ribosomal subunit protein uS15 (89 aa).

This sequence belongs to the universal ribosomal protein uS15 family. In terms of assembly, part of the 30S ribosomal subunit. Forms a bridge to the 50S subunit in the 70S ribosome, contacting the 23S rRNA.

Its function is as follows. One of the primary rRNA binding proteins, it binds directly to 16S rRNA where it helps nucleate assembly of the platform of the 30S subunit by binding and bridging several RNA helices of the 16S rRNA. Functionally, forms an intersubunit bridge (bridge B4) with the 23S rRNA of the 50S subunit in the ribosome. The chain is Small ribosomal subunit protein uS15 from Shewanella putrefaciens (strain CN-32 / ATCC BAA-453).